We begin with the raw amino-acid sequence, 501 residues long: Dihydrolipoyl dehydrogenase, mitochondrial (501 aa).

The transit peptide at 1 to 31 (MAMANLARRKGYSLLSSETLRYSFSLRSRAF) directs the protein to the mitochondrion. FAD is bound by residues 67-76 (EKRGALGGTC), lysine 85, glycine 149, and 178-180 (TGS). A disulfide bridge links cysteine 76 with cysteine 81. Residues 215–222 (GAGYIGLE), glutamate 238, valine 272, and glycine 307 contribute to the NAD(+) site. FAD contacts are provided by residues aspartate 348 and 354 to 357 (MLAH). Catalysis depends on histidine 480, which acts as the Proton acceptor.

The protein belongs to the class-I pyridine nucleotide-disulfide oxidoreductase family. In terms of assembly, homodimer. It depends on FAD as a cofactor.

The protein localises to the mitochondrion matrix. It catalyses the reaction N(6)-[(R)-dihydrolipoyl]-L-lysyl-[protein] + NAD(+) = N(6)-[(R)-lipoyl]-L-lysyl-[protein] + NADH + H(+). Lipoamide dehydrogenase is a component of the glycine cleavage system as well as of the alpha-ketoacid dehydrogenase complexes. The pyruvate dehydrogenase complex contains multiple copies of three enzymatic components: pyruvate dehydrogenase (E1), dihydrolipoamide acetyltransferase (E2) and lipoamide dehydrogenase (E3). This is Dihydrolipoyl dehydrogenase, mitochondrial (LPD) from Pisum sativum (Garden pea).